The sequence spans 355 residues: tRNA-specific 2-thiouridylase MnmA (355 aa).

Residues 6–13 (LLSGGVDS) and Leu33 each bind ATP. Cys100 acts as the Nucleophile in catalysis. A disulfide bridge links Cys100 with Cys195. Gly123 provides a ligand contact to ATP. The tract at residues 145 to 147 (KDQ) is interaction with tRNA. The Cysteine persulfide intermediate role is filled by Cys195.

The protein belongs to the MnmA/TRMU family.

The protein resides in the cytoplasm. The catalysed reaction is S-sulfanyl-L-cysteinyl-[protein] + uridine(34) in tRNA + AH2 + ATP = 2-thiouridine(34) in tRNA + L-cysteinyl-[protein] + A + AMP + diphosphate + H(+). Catalyzes the 2-thiolation of uridine at the wobble position (U34) of tRNA, leading to the formation of s(2)U34. This Borrelia garinii subsp. bavariensis (strain ATCC BAA-2496 / DSM 23469 / PBi) (Borreliella bavariensis) protein is tRNA-specific 2-thiouridylase MnmA.